Consider the following 215-residue polypeptide: S-crystallin 4 (215 aa).

The GST N-terminal domain occupies 2–80 (PSYTLHYFNH…YLAREFGFHG (79 aa)). The GST C-terminal domain occupies 82 to 215 (NNMDMARVDY…YLQKRSRTEF (134 aa)).

It belongs to the GST superfamily. As to expression, lens.

Its function is as follows. S-crystallins are structural components of squids and octopi eye lens. Contains relatively little if any GST activity. In Enteroctopus dofleini (North Pacific giant octopus), this protein is S-crystallin 4.